A 532-amino-acid chain; its full sequence is Glucose-6-phosphate isomerase (532 aa).

Residue Glu330 is the Proton donor of the active site. Active-site residues include His359 and Lys461.

The protein belongs to the GPI family.

It is found in the cytoplasm. It catalyses the reaction alpha-D-glucose 6-phosphate = beta-D-fructose 6-phosphate. Its pathway is carbohydrate biosynthesis; gluconeogenesis. It functions in the pathway carbohydrate degradation; glycolysis; D-glyceraldehyde 3-phosphate and glycerone phosphate from D-glucose: step 2/4. Its function is as follows. Catalyzes the reversible isomerization of glucose-6-phosphate to fructose-6-phosphate. This chain is Glucose-6-phosphate isomerase, found in Synechococcus sp. (strain CC9605).